Here is a 424-residue protein sequence, read N- to C-terminus: Testican-2 (424 aa).

The N-terminal stretch at 1 to 22 is a signal peptide; the sequence is MRAPGCGRLVLPLLLLAAAALA. A Phosphoserine; by FAM20C modification is found at Ser72. Disulfide bonds link Cys90–Cys101, Cys95–Cys111, Cys136–Cys166, Cys139–Cys159, and Cys148–Cys180. The 53-residue stretch at 130–182 folds into the Kazal-like domain; the sequence is GNKDSICKPCHMAQLASVCGSDGHTYSSVCKLEQQACLSSKQLAVRCEGPCPC. Asn225 is a glycosylation site (N-linked (GlcNAc...) asparagine). A Thyroglobulin type-1 domain is found at 310–376; sequence KPPCLAELER…GTRTHGSPDC (67 aa). Disulfide bonds link Cys313-Cys337, Cys348-Cys355, and Cys357-Cys376. Residues Ser383 and Ser388 are each glycosylated (O-linked (Xyl...) (glycosaminoglycan) serine). The interval 387–424 is disordered; the sequence is GSGVGWEDEEEKETEEAGEEAEEEEGEAGEADDGGYIW. A compositionally biased stretch (acidic residues) spans 392-424; sequence WEDEEEKETEEAGEEAEEEEGEAGEADDGGYIW.

Post-translationally, contains chondroitin sulfate and heparan sulfate O-linked oligosaccharides. As to expression, highly expressed in brain. Also found in lung and testis.

The protein localises to the secreted. The protein resides in the extracellular space. Its subcellular location is the extracellular matrix. Functionally, may participate in diverse steps of neurogenesis. Binds calcium. This Homo sapiens (Human) protein is Testican-2 (SPOCK2).